Here is a 368-residue protein sequence, read N- to C-terminus: Zinc finger protein 24 (368 aa).

A Glycyl lysine isopeptide (Lys-Gly) (interchain with G-Cter in SUMO2) cross-link involves residue K22. K27 participates in a covalent cross-link: Glycyl lysine isopeptide (Lys-Gly) (interchain with G-Cter in SUMO1); alternate. K27 participates in a covalent cross-link: Glycyl lysine isopeptide (Lys-Gly) (interchain with G-Cter in SUMO2); alternate. One can recognise an SCAN box domain in the interval 52–134 (RQRFRQFGYQ…TVLEDLESEL (83 aa)). Phosphoserine is present on residues S132 and S142. Residues K147, K177, and K236 each participate in a glycyl lysine isopeptide (Lys-Gly) (interchain with G-Cter in SUMO2) cross-link. The segment at 251–273 (HICDECGKHFSQGSALILHQRIH) adopts a C2H2-type 1 zinc-finger fold. Positions 251–301 (HICDECGKHFSQGSALILHQRIHSGEKPYGCVECGKAFSRSSILVQHQRVH) are necessary and sufficient for nuclear localization. S274 carries the phosphoserine modification. Residues K277 and K286 each participate in a glycyl lysine isopeptide (Lys-Gly) (interchain with G-Cter in SUMO2) cross-link. C2H2-type zinc fingers lie at residues 279 to 301 (YGCV…QRVH), 307 to 329 (YKCL…QRIH), and 335 to 357 (YECV…QRRH). S292 carries the post-translational modification Phosphoserine. The residue at position 335 (Y335) is a Phosphotyrosine. Residues K361 and K367 each participate in a glycyl lysine isopeptide (Lys-Gly) (interchain with G-Cter in SUMO2) cross-link.

It belongs to the krueppel C2H2-type zinc-finger protein family. Sumoylated.

The protein resides in the nucleus. Transcription factor required for myelination of differentiated oligodendrocytes. Required for the conversion of oligodendrocytes from the premyelinating to the myelinating state. In the developing central nervous system (CNS), involved in the maintenance in the progenitor stage by promoting the cell cycle. Specifically binds to the 5'-TCAT-3' DNA sequence. Has transcription repressor activity in vitro. This is Zinc finger protein 24 (ZNF24) from Pongo abelii (Sumatran orangutan).